We begin with the raw amino-acid sequence, 171 residues long: Viral CASP8 and FADD-like apoptosis regulator (171 aa).

2 DED domains span residues 1–74 and 92–171; these read MSHY…RIFG and PFRC…NLQV.

As to quaternary structure, associates with the death-inducing signaling complex (DISC) formed by TNFRSF6, FADD and caspase-8. Interacts with FADD.

In terms of biological role, inhibits TNFRSF1A, TNFRSF6, TNFRSF10 and TNFRSF12 induced apoptosis. May interfere with caspase-8 recruitment and activation at the death-inducing signaling complex (DISC). May lead to higher virus production and contribute to virus persistence and oncogenicity. The protein is Viral CASP8 and FADD-like apoptosis regulator of Equus caballus (Horse).